The sequence spans 945 residues: Sensor kinase CckA (945 aa).

A run of 2 helical transmembrane segments spans residues 111 to 131 (ALRL…YFLF) and 139 to 159 (FALV…FGAA). 3 PAS domains span residues 171–212 (HQDL…TDAD), 313–341 (LDHA…EWLG), and 432–505 (AEVR…FAGQ). Residues 574-797 (GIAHDFNNVL…TFKIFLPRLI (224 aa)) form the Histidine kinase domain. Residue His-577 is modified to Phosphohistidine; by autocatalysis. The 117-residue stretch at 825 to 941 (TVLLVEDEDA…QLATTVKEML (117 aa)) folds into the Response regulatory domain. At Asp-876 the chain carries 4-aspartylphosphate.

It is found in the cell inner membrane. The catalysed reaction is ATP + protein L-histidine = ADP + protein N-phospho-L-histidine.. In terms of biological role, component of a regulatory phosphorelay system that controls B.abortus cell growth, division, and intracellular survival inside mammalian host cells. This signaling pathway is composed of CckA, ChpT, CtrA and CpdR. CckA autophosphorylates in the presence of ATP on a conserved His residue and transfers a phosphoryl group to a conserved Asp residue on its C-terminal receiver domain. CckA-P transfers phosphoryl groups to the ChpT phosphotransferase. This is Sensor kinase CckA from Brucella abortus (strain 2308).